Here is a 279-residue protein sequence, read N- to C-terminus: Small ribosomal subunit protein uS2 (279 aa).

Residues 232 to 260 (KVDMEAAGENAPKGAGKKKNTKARMDKAE) are disordered.

The protein belongs to the universal ribosomal protein uS2 family.

This is Small ribosomal subunit protein uS2 from Phocaeicola vulgatus (strain ATCC 8482 / DSM 1447 / JCM 5826 / CCUG 4940 / NBRC 14291 / NCTC 11154) (Bacteroides vulgatus).